The sequence spans 1099 residues: MSGPSQDSEPEAKVLHIKRLYRAVVETVHKLDIIISGKSSYREVFKPENISLRNKLRELCVKLMFLHPVDYGRKAEELLWRKVYYEVIQVIKTNKKHIHSRSALECAYRTHLIAGVGFFQHLLLYIQSHYQLELQDCIDWTHVTDPLIGRKKPVSATSKEMEWAQMACHRCLVYLGDLARYQNELAGVEAEQLAERFYHQALSVAPHVGMPFNQLGTLAGSKFYNVEATYYYLRCIQSETPFDGAYGNLKRLFDKASKMYHQVKKQEMKKLSPSRQRSKDIKRLLVSFMYLQSLLQPKNSLMETELTSLCQSVLEDFNLVLFYLPLPAHGSQSASEEEEEHDSVGSVLPDSLIFKMVVICLMVVHSLKRGASKQYSASIAFTLALFSHLVNHVNIRLQAELEEGESDVPALRTDNTDDADARDHSSAALSEERTLQNGSLEEDDDEEEEEKENGEDEPKGNGRTVATKKNQEKKRSAEEKQKQKRKFSRLSMLRRRRCAHKEDESDLSEGFESDEEEEEEEEGGGGGLVDGLGAPRVQMNSLGRDTRKGPLPEDGGWESGSEEDEGGTAFDVETDSDMNSQESRSDLEDMEDAENAPQQPQQEENEQPQTSREENATPPVTNGPSVSNDASISSNLQAMSSQLFQAKRCFRLAPTFSNVLLRPATTTPPAPESNPAPVQEITPPTGETPRNTSPEIANGTNDKDPDSNSEGSEHSNHSFHSEKTLSERLEILTNQGLIQVVKVFLDWLRTNTDIILMCAQSSQSLWNRLSVLLNLLPEGSKILETDIGLNKDVTELLSECEHPSLAQTLLLPEDMALRHLPALSIAHRRLDFTSQRPPLTPLDECVVRVCCIRSFGHFLTNLQGNVLHFNPEAGIFTSISQSEQDNLVQQAKAQFRMAEEEARRNRLMRDMAQLRLQLEVSQLEGSLQQPKAQSSMSPYLVPDTAVLCQHLGLLRQLAASGCFIIIIPRTVIDGLDMLKKENSGARDGIRFLETEFRKGNRYIRCQKESGRSFERDKLKRQDTEAWHLYKMVDSCRQLTGSQSSGDEDTAGMVTILTGHSLEELSERSASMKAAVQAVAAAGMELKNIIEFYRQWKEMG.

Disordered regions lie at residues 403-631 (EGES…NDAS) and 663-722 (PATT…FHSE). Residues 419 to 434 (ADARDHSSAALSEERT) show a composition bias toward basic and acidic residues. The segment covering 440–455 (LEEDDDEEEEEKENGE) has biased composition (acidic residues). The segment covering 469–481 (KNQEKKRSAEEKQ) has biased composition (basic and acidic residues). Positions 482 to 499 (KQKRKFSRLSMLRRRRCA) are enriched in basic residues. Acidic residues-rich tracts occupy residues 504-523 (ESDL…EEEG) and 560-576 (GSEE…ETDS). Composition is skewed to polar residues over residues 618-631 (PPVT…NDAS) and 688-700 (TPRN…ANGT). Basic and acidic residues predominate over residues 701–722 (NDKDPDSNSEGSEHSNHSFHSE). The PINc domain occupies 938–1061 (PYLVPDTAVL…MVTILTGHSL (124 aa)).

Its subcellular location is the cytoplasm. The protein resides in the nucleus. Plays a role in nonsense-mediated mRNA decay. Does not have RNase activity by itself. Promotes dephosphorylation of UPF1. Together with SMG7 is thought to provide a link to the mRNA degradation machinery involving exonucleolytic pathways, and to serve as an adapter for UPF1 to protein phosphatase 2A (PP2A), thereby triggering UPF1 dephosphorylation. Necessary for TERT activity. Required for normal embryonic development. This chain is Nonsense-mediated mRNA decay factor SMG5 (smg5), found in Danio rerio (Zebrafish).